A 142-amino-acid polypeptide reads, in one-letter code: Small ribosomal subunit protein uS12 (142 aa).

Residues 1–30 (MGKTRGMGAARKLKNHRRRQRWADKSYKKS) are disordered. Residues 11–20 (RKLKNHRRRQ) are compositionally biased toward basic residues. Over residues 21–30 (RWADKSYKKS) the composition is skewed to basic and acidic residues. Hydroxyproline is present on Pro61.

The protein belongs to the universal ribosomal protein uS12 family.

This is Small ribosomal subunit protein uS12 (RPS23) from Fragaria ananassa (Strawberry).